A 477-amino-acid chain; its full sequence is Homeobox protein Meis2 (477 aa).

The tract at residues 71–191 is required for interaction with PBX1; sequence DALKRDKDAI…KMPIDLVIDE (121 aa). In terms of domain architecture, MEIS N-terminal spans 110 to 193; sequence GGDVCSSDSF…PIDLVIDERD (84 aa). A compositionally biased stretch (basic and acidic residues) spans 193–203; it reads DGSSKSDHEEL. The disordered stretch occupies residues 193–283; it reads DGSSKSDHEE…KKRQKKRGIF (91 aa). Composition is skewed to polar residues over residues 204–217 and 239–251; these read SGSSTNLADHNPSS and GHASQSGDNSSEQ. The homeobox; TALE-type DNA-binding region spans 276 to 338; sequence RQKKRGIFPK…NARRRIVQPM (63 aa). The interval 299 to 333 is interaction with DNA; that stretch reads LTHPYPSEEQKKQLAQDTGLTILQVNNWFINARRR. The transcriptional activation domain stretch occupies residues 340-477; it reads DQSNRAGFLL…GGQVMDIHAQ (138 aa).

Belongs to the TALE/MEIS homeobox family. In terms of assembly, monomer and homodimer. Heterodimer with HOXB13. Isoform Meis2A interacts with TLX1. Isoform Meis2B interacts with HOXA13 and PBX1 isoform PBX1b. Isoform Meis2D interacts with SP1, SP3 and KLF4. Isoform Meis2D interacts with PBX1 isoform PBX1a; the interaction partially relieves MEIS2 autoinhibition. Isoform Meis2B is part of a PDX1:PBX1b:MEIS2b complex; Meis2B is recruited by PBX1b and can be replaced by isoform Meis2D in a small fraction of complexes. Can form trimeric complexes including HOXB8 and PBX2 or PBX3. Displays spatially restricted expression patterns in the developing nervous system, limbs, face, and in various viscera. In adult, it is mainly expressed in the brain and female genital tract, with a different distribution of the alternative splice forms in these organs. Lower expression in lung and only basal level in heart, liver, kidney, spleen, and testis. Expressed in pancreatic islets (beta-cells only).

The protein localises to the nucleus. It is found in the cytoplasm. Its subcellular location is the perinuclear region. Functionally, involved in transcriptional regulation. Binds to HOX or PBX proteins to form dimers, or to a DNA-bound dimer of PBX and HOX proteins and thought to have a role in stabilization of the homeoprotein-DNA complex. Isoform Meis2B is required for the activity of a PDX1:PBX1b:MEIS2b complex in pancreatic acinar cells involved in the transcriptional activation of the ELA1 enhancer; the complex binds to the enhancer B element and cooperates with the transcription factor 1 complex (PTF1) bound to the enhancer A element; MEIS2 is not involved in complex DNA-binding. Probably in complex with PBX1, is involved in transcriptional regulation by KLF4. Isoforms Meis2B and Meis2D can bind to a EPHA8 promoter sequence containing the DNA motif 5'-CGGTCA-3'; in cooperation with a PBX protein (such as PBX2) is proposed to be involved in the transcriptional activation of EPHA8 in the developing midbrain. May be involved in regulation of myeloid differentiation. Can bind to the DNA sequence 5'-TGACAG-3'in the activator ACT sequence of the D(1A) dopamine receptor (DRD1) promoter and activate DRD1 transcription. In Mus musculus (Mouse), this protein is Homeobox protein Meis2 (Meis2).